A 243-amino-acid polypeptide reads, in one-letter code: 7-carboxy-7-deazaguanine synthase (243 aa).

Substrate is bound by residues 9-11 (IMG) and Arg-24. A Radical SAM core domain is found at 15–243 (YIGRRFIFVR…IQMHKYLGML (229 aa)). Cys-28, Cys-32, and Cys-35 together coordinate [4Fe-4S] cluster. Thr-84 lines the substrate pocket. Gly-86 contributes to the S-adenosyl-L-methionine binding site.

It belongs to the radical SAM superfamily. 7-carboxy-7-deazaguanine synthase family. As to quaternary structure, homodimer. [4Fe-4S] cluster serves as cofactor. It depends on S-adenosyl-L-methionine as a cofactor. Requires Mg(2+) as cofactor.

The enzyme catalyses 6-carboxy-5,6,7,8-tetrahydropterin + H(+) = 7-carboxy-7-deazaguanine + NH4(+). It functions in the pathway purine metabolism; 7-cyano-7-deazaguanine biosynthesis. Its function is as follows. Catalyzes the complex heterocyclic radical-mediated conversion of 6-carboxy-5,6,7,8-tetrahydropterin (CPH4) to 7-carboxy-7-deazaguanine (CDG), a step common to the biosynthetic pathways of all 7-deazapurine-containing compounds. The chain is 7-carboxy-7-deazaguanine synthase from Methanocaldococcus jannaschii (strain ATCC 43067 / DSM 2661 / JAL-1 / JCM 10045 / NBRC 100440) (Methanococcus jannaschii).